Reading from the N-terminus, the 311-residue chain is Geranylgeranyl transferase type-2 subunit beta (311 aa).

5 PFTB repeats span residues 54–95 (KERI…AMLD), 102–143 (KDKV…AILG), 150–191 (KNTA…KILN), 197–239 (DEEL…AIIG), and 246–288 (RNQL…SLLQ). Geranylgeranyl diphosphate-binding positions include 176–178 (HGA) and 218–230 (RPEK…YGWW). Positions 224, 226, and 276 each coordinate Zn(2+).

This sequence belongs to the protein prenyltransferase subunit beta family. As to quaternary structure, heterodimer of an alpha and a beta subunit. Requires Zn(2+) as cofactor.

It carries out the reaction geranylgeranyl diphosphate + L-cysteinyl-[protein] = S-geranylgeranyl-L-cysteinyl-[protein] + diphosphate. In terms of biological role, catalyzes the transfer of a geranyl-geranyl moiety from geranyl-geranyl pyrophosphate to proteins having the C-terminal -XCC or -XCXC, where both cysteines may become modified. The chain is Geranylgeranyl transferase type-2 subunit beta (ptb1) from Schizosaccharomyces pombe (strain 972 / ATCC 24843) (Fission yeast).